Reading from the N-terminus, the 432-residue chain is Putative D-alanyl-D-alanine carboxypeptidase (432 aa).

The chain crosses the membrane as a helical; Signal-anchor span at residues 7–25 (ATVLLTFSLSAFAVEYPVL).

This sequence belongs to the peptidase S12 family. YfeW subfamily.

Its subcellular location is the cell inner membrane. The enzyme catalyses Preferential cleavage: (Ac)2-L-Lys-D-Ala-|-D-Ala. Also transpeptidation of peptidyl-alanyl moieties that are N-acyl substituents of D-alanine.. The chain is Putative D-alanyl-D-alanine carboxypeptidase from Salmonella choleraesuis (strain SC-B67).